The following is a 342-amino-acid chain: S-adenosylmethionine:tRNA ribosyltransferase-isomerase (342 aa).

It belongs to the QueA family. Monomer.

It is found in the cytoplasm. It carries out the reaction 7-aminomethyl-7-carbaguanosine(34) in tRNA + S-adenosyl-L-methionine = epoxyqueuosine(34) in tRNA + adenine + L-methionine + 2 H(+). The protein operates within tRNA modification; tRNA-queuosine biosynthesis. In terms of biological role, transfers and isomerizes the ribose moiety from AdoMet to the 7-aminomethyl group of 7-deazaguanine (preQ1-tRNA) to give epoxyqueuosine (oQ-tRNA). This Bacillus licheniformis (strain ATCC 14580 / DSM 13 / JCM 2505 / CCUG 7422 / NBRC 12200 / NCIMB 9375 / NCTC 10341 / NRRL NRS-1264 / Gibson 46) protein is S-adenosylmethionine:tRNA ribosyltransferase-isomerase.